A 450-amino-acid chain; its full sequence is Saccharopine dehydrogenase [NADP(+), L-glutamate-forming] (450 aa).

NADP(+)-binding positions include 11 to 14 (SGFV), 33 to 35 (CRT), 55 to 56 (DV), I76, 98 to 99 (TS), 125 to 127 (LDP), and S175. Residues 99 to 100 (SY) and D126 contribute to the L-saccharopine site. Residues R224 and 245–247 (TLR) contribute to the L-saccharopine site.

The protein belongs to the saccharopine dehydrogenase family. Homodimer.

The enzyme catalyses L-saccharopine + NADP(+) + H2O = (S)-2-amino-6-oxohexanoate + L-glutamate + NADPH + H(+). It functions in the pathway amino-acid biosynthesis; L-lysine biosynthesis via AAA pathway; L-lysine from L-alpha-aminoadipate (fungal route): step 2/3. The polypeptide is Saccharopine dehydrogenase [NADP(+), L-glutamate-forming] (LYS3) (Pyricularia oryzae (strain 70-15 / ATCC MYA-4617 / FGSC 8958) (Rice blast fungus)).